The primary structure comprises 216 residues: Probable glutamine ABC transporter permease protein GlnM (216 aa).

The region spanning 17-205 (FYHTLLASVI…VLTIPLSIGV (189 aa)) is the ABC transmembrane type-1 domain. 5 helical membrane passes run 21–41 (LLAS…VAVM), 63–83 (IPLL…GLRL), 85–105 (GFQA…AEAI), 132–152 (LHII…NQFL), and 181–201 (LVVF…TIPL).

This sequence belongs to the binding-protein-dependent transport system permease family. In terms of assembly, the complex is composed of two ATP-binding proteins (GlnQ), two transmembrane proteins (GlnM and GlnP) and a solute-binding protein (GlnH).

The protein resides in the cell membrane. Its function is as follows. Part of the ABC transporter complex GlnHMPQ involved in glutamine transport. Probably responsible for the translocation of the substrate across the membrane. The polypeptide is Probable glutamine ABC transporter permease protein GlnM (glnM) (Bacillus subtilis (strain 168)).